The primary structure comprises 1230 residues: ABC transporter B family member 5 (1230 aa).

The next 6 membrane-spanning stretches (helical) occupy residues 27 to 47 (VLLMIVGSIGAIANGVCSPLM), 78 to 98 (LVYLGLGALGAAFLQVACWMI), 154 to 174 (FIQLISTFVGGFVIAFLRGWL), 177 to 197 (LVMLTSIPLLAMSGAAIAIIV), 253 to 273 (GFVTGLGLGVMFLVFFSTYAL), and 286 to 306 (GYTGGAVINVMVTVVSSSIAL). The 289-residue stretch at 30-318 (MIVGSIGAIA…ASPCLTAFTA (289 aa)) folds into the ABC transmembrane type-1 1 domain. Residues 353–589 (IELRDVCFSY…HEGAYSQLLR (237 aa)) form the ABC transporter 1 domain. Position 388 to 395 (388 to 395 (GESGSGKS)) interacts with ATP. Residues N540, N615, and N616 are each glycosylated (N-linked (GlcNAc...) asparagine). Residues 602-621 (ISDGSISSGSSRGNNSTRQD) are disordered. The segment covering 603 to 617 (SDGSISSGSSRGNNS) has biased composition (low complexity). 2 consecutive transmembrane segments (helical) span residues 662 to 682 (ILILGTLVGAVNGTIFPIFGI) and 707 to 727 (MIFVLLGVAAVIVYPTTNYLF). An ABC transmembrane type-1 2 domain is found at 663–950 (LILGTLVGAV…ASSFAPDSSK (288 aa)). A glycan (N-linked (GlcNAc...) asparagine) is linked at N759. 3 helical membrane passes run 798–818 (IIAFTASWEVAIIILVIIPFI), 889–909 (GVGFGISFFVLYSVYASCFYV), and 924–944 (VFQVFLALTLTAVGISQASSF). The 239-residue stretch at 985–1223 (IELCHISFTY…EGGVYASLVQ (239 aa)) folds into the ABC transporter 2 domain. 1020–1027 (GESGSGKS) serves as a coordination point for ATP. N1074, N1174, and N1227 each carry an N-linked (GlcNAc...) asparagine glycan.

This sequence belongs to the ABC transporter superfamily. ABCB family. Multidrug resistance exporter (TC 3.A.1.201) subfamily.

Its subcellular location is the membrane. The polypeptide is ABC transporter B family member 5 (ABCB5) (Arabidopsis thaliana (Mouse-ear cress)).